A 414-amino-acid polypeptide reads, in one-letter code: L-cysteine:1D-myo-inositol 2-amino-2-deoxy-alpha-D-glucopyranoside ligase (414 aa).

Cysteine 43 is a binding site for Zn(2+). L-cysteinyl-5'-AMP is bound by residues 43–46 (CGIT), threonine 58, and 81–83 (NIT). Residues 45–55 (ITPYDATHLGH) carry the 'HIGH' region motif. The 'ERGGDP' region motif lies at 189-194 (ERGGDP). An L-cysteinyl-5'-AMP-binding site is contributed by tryptophan 229. Residue cysteine 233 coordinates Zn(2+). 251 to 253 (GSD) is a binding site for L-cysteinyl-5'-AMP. Histidine 258 is a binding site for Zn(2+). An L-cysteinyl-5'-AMP-binding site is contributed by isoleucine 285. The 'KMSKS' region signature appears at 291–295 (KMSKS).

Belongs to the class-I aminoacyl-tRNA synthetase family. MshC subfamily. Monomer. The cofactor is Zn(2+).

The catalysed reaction is 1D-myo-inositol 2-amino-2-deoxy-alpha-D-glucopyranoside + L-cysteine + ATP = 1D-myo-inositol 2-(L-cysteinylamino)-2-deoxy-alpha-D-glucopyranoside + AMP + diphosphate + H(+). Functionally, catalyzes the ATP-dependent condensation of GlcN-Ins and L-cysteine to form L-Cys-GlcN-Ins. This chain is L-cysteine:1D-myo-inositol 2-amino-2-deoxy-alpha-D-glucopyranoside ligase (mshC), found in Mycobacterium bovis (strain ATCC BAA-935 / AF2122/97).